Reading from the N-terminus, the 217-residue chain is ATP phosphoribosyltransferase (217 aa).

Belongs to the ATP phosphoribosyltransferase family. Short subfamily. Heteromultimer composed of HisG and HisZ subunits.

The protein localises to the cytoplasm. It catalyses the reaction 1-(5-phospho-beta-D-ribosyl)-ATP + diphosphate = 5-phospho-alpha-D-ribose 1-diphosphate + ATP. It functions in the pathway amino-acid biosynthesis; L-histidine biosynthesis; L-histidine from 5-phospho-alpha-D-ribose 1-diphosphate: step 1/9. Its function is as follows. Catalyzes the condensation of ATP and 5-phosphoribose 1-diphosphate to form N'-(5'-phosphoribosyl)-ATP (PR-ATP). Has a crucial role in the pathway because the rate of histidine biosynthesis seems to be controlled primarily by regulation of HisG enzymatic activity. The sequence is that of ATP phosphoribosyltransferase from Burkholderia vietnamiensis (strain G4 / LMG 22486) (Burkholderia cepacia (strain R1808)).